Here is a 317-residue protein sequence, read N- to C-terminus: Ribose-phosphate pyrophosphokinase (317 aa).

ATP is bound by residues 43-45 (DGE) and 102-103 (RQ). Positions 136 and 175 each coordinate Mg(2+). K198 is an active-site residue. D-ribose 5-phosphate is bound by residues R200, D224, and 228–232 (DTAGT).

Belongs to the ribose-phosphate pyrophosphokinase family. Class I subfamily. Homohexamer. Mg(2+) serves as cofactor.

It is found in the cytoplasm. It catalyses the reaction D-ribose 5-phosphate + ATP = 5-phospho-alpha-D-ribose 1-diphosphate + AMP + H(+). Its pathway is metabolic intermediate biosynthesis; 5-phospho-alpha-D-ribose 1-diphosphate biosynthesis; 5-phospho-alpha-D-ribose 1-diphosphate from D-ribose 5-phosphate (route I): step 1/1. Involved in the biosynthesis of the central metabolite phospho-alpha-D-ribosyl-1-pyrophosphate (PRPP) via the transfer of pyrophosphoryl group from ATP to 1-hydroxyl of ribose-5-phosphate (Rib-5-P). The protein is Ribose-phosphate pyrophosphokinase of Bacillus anthracis.